Here is a 255-residue protein sequence, read N- to C-terminus: Gene 54 protein (255 aa).

In Mycobacterium phage D29 (Mycobacteriophage D29), this protein is Gene 54 protein (54).